A 155-amino-acid chain; its full sequence is MSRRGTVEEKTAKSDPIYRNRLVNMLVNRILKHGKKSLAYQIIYRAVKKIQQKTETNPLSVLRQAIRGVTPDIAVKARRVGGSTHQVPIEIGSTQGKALAIRWLLGAARKRPGRNMAFKLSSELVDAAKGSGDAIRKKEETHRMAEANRAFAHFR.

It belongs to the universal ribosomal protein uS7 family. As to quaternary structure, part of the 30S ribosomal subunit.

The protein localises to the plastid. The protein resides in the chloroplast. One of the primary rRNA binding proteins, it binds directly to 16S rRNA where it nucleates assembly of the head domain of the 30S subunit. The sequence is that of Small ribosomal subunit protein uS7c (rps7) from Silene latifolia (White campion).